The sequence spans 419 residues: UDP-N-acetylglucosamine 1-carboxyvinyltransferase (419 aa).

A phosphoenolpyruvate-binding site is contributed by 22 to 23 (KN). Arg-91 contacts UDP-N-acetyl-alpha-D-glucosamine. Cys-115 functions as the Proton donor in the catalytic mechanism. 2-(S-cysteinyl)pyruvic acid O-phosphothioketal is present on Cys-115. UDP-N-acetyl-alpha-D-glucosamine contacts are provided by residues 120–124 (RPVDL), 160–163 (KVSV), Asp-305, and Val-327.

It belongs to the EPSP synthase family. MurA subfamily.

It is found in the cytoplasm. The catalysed reaction is phosphoenolpyruvate + UDP-N-acetyl-alpha-D-glucosamine = UDP-N-acetyl-3-O-(1-carboxyvinyl)-alpha-D-glucosamine + phosphate. It participates in cell wall biogenesis; peptidoglycan biosynthesis. In terms of biological role, cell wall formation. Adds enolpyruvyl to UDP-N-acetylglucosamine. The sequence is that of UDP-N-acetylglucosamine 1-carboxyvinyltransferase from Salmonella gallinarum (strain 287/91 / NCTC 13346).